A 431-amino-acid polypeptide reads, in one-letter code: Enolase (431 aa).

Gln-163 is a (2R)-2-phosphoglycerate binding site. Glu-205 serves as the catalytic Proton donor. Asp-242, Glu-288, and Asp-315 together coordinate Mg(2+). Residues Lys-340, Arg-369, Ser-370, and Lys-391 each contribute to the (2R)-2-phosphoglycerate site. Lys-340 functions as the Proton acceptor in the catalytic mechanism.

It belongs to the enolase family. Mg(2+) serves as cofactor.

It is found in the cytoplasm. The protein localises to the secreted. Its subcellular location is the cell surface. The catalysed reaction is (2R)-2-phosphoglycerate = phosphoenolpyruvate + H2O. It functions in the pathway carbohydrate degradation; glycolysis; pyruvate from D-glyceraldehyde 3-phosphate: step 4/5. Functionally, catalyzes the reversible conversion of 2-phosphoglycerate (2-PG) into phosphoenolpyruvate (PEP). It is essential for the degradation of carbohydrates via glycolysis. The chain is Enolase from Bacillus cereus (strain B4264).